A 159-amino-acid chain; its full sequence is Ribosomal RNA large subunit methyltransferase H (159 aa).

S-adenosyl-L-methionine contacts are provided by residues Leu76, Gly108, and 127–132 (FSKMTF).

It belongs to the RNA methyltransferase RlmH family. In terms of assembly, homodimer.

The protein localises to the cytoplasm. The catalysed reaction is pseudouridine(1915) in 23S rRNA + S-adenosyl-L-methionine = N(3)-methylpseudouridine(1915) in 23S rRNA + S-adenosyl-L-homocysteine + H(+). Functionally, specifically methylates the pseudouridine at position 1915 (m3Psi1915) in 23S rRNA. The protein is Ribosomal RNA large subunit methyltransferase H of Staphylococcus aureus (strain MSSA476).